A 340-amino-acid polypeptide reads, in one-letter code: Glycerol-3-phosphate dehydrogenase [NAD(P)+] (340 aa).

Residues W11, R33, and K110 each coordinate NADPH. Positions 110, 144, and 146 each coordinate sn-glycerol 3-phosphate. A148 is an NADPH binding site. Residues K199, D252, S262, R263, and N264 each contribute to the sn-glycerol 3-phosphate site. K199 functions as the Proton acceptor in the catalytic mechanism. Position 263 (R263) interacts with NADPH. The NADPH site is built by V287 and E289.

This sequence belongs to the NAD-dependent glycerol-3-phosphate dehydrogenase family.

The protein resides in the cytoplasm. It catalyses the reaction sn-glycerol 3-phosphate + NAD(+) = dihydroxyacetone phosphate + NADH + H(+). It carries out the reaction sn-glycerol 3-phosphate + NADP(+) = dihydroxyacetone phosphate + NADPH + H(+). The protein operates within membrane lipid metabolism; glycerophospholipid metabolism. In terms of biological role, catalyzes the reduction of the glycolytic intermediate dihydroxyacetone phosphate (DHAP) to sn-glycerol 3-phosphate (G3P), the key precursor for phospholipid synthesis. This chain is Glycerol-3-phosphate dehydrogenase [NAD(P)+], found in Polynucleobacter necessarius subsp. necessarius (strain STIR1).